Here is a 223-residue protein sequence, read N- to C-terminus: Holliday junction branch migration complex subunit RuvA (223 aa).

Positions 1–67 (MIGWLKGEKI…EDGSNLFGFI (67 aa)) are domain I. Positions 68–146 (EKSERDLFRK…DFDLNNEFSP (79 aa)) are domain II. The segment at 147 to 157 (PTKLRPESAED) is flexible linker. The domain III stretch occupies residues 158–223 (LNEELLTEIK…FKQALITLNK (66 aa)).

This sequence belongs to the RuvA family. As to quaternary structure, homotetramer. Forms an RuvA(8)-RuvB(12)-Holliday junction (HJ) complex. HJ DNA is sandwiched between 2 RuvA tetramers; dsDNA enters through RuvA and exits via RuvB. An RuvB hexamer assembles on each DNA strand where it exits the tetramer. Each RuvB hexamer is contacted by two RuvA subunits (via domain III) on 2 adjacent RuvB subunits; this complex drives branch migration. In the full resolvosome a probable DNA-RuvA(4)-RuvB(12)-RuvC(2) complex forms which resolves the HJ.

It localises to the cytoplasm. The RuvA-RuvB-RuvC complex processes Holliday junction (HJ) DNA during genetic recombination and DNA repair, while the RuvA-RuvB complex plays an important role in the rescue of blocked DNA replication forks via replication fork reversal (RFR). RuvA specifically binds to HJ cruciform DNA, conferring on it an open structure. The RuvB hexamer acts as an ATP-dependent pump, pulling dsDNA into and through the RuvAB complex. HJ branch migration allows RuvC to scan DNA until it finds its consensus sequence, where it cleaves and resolves the cruciform DNA. The protein is Holliday junction branch migration complex subunit RuvA of Prochlorococcus marinus (strain MIT 9211).